The primary structure comprises 708 residues: Exocyst complex component 5 (708 aa).

N-acetylalanine is present on alanine 2. The stretch at 40-101 (KRLLEEFVNH…AFQHFQELDE (62 aa)) forms a coiled coil. Threonine 122, threonine 395, and threonine 405 each carry phosphothreonine. Serine 412 carries the phosphoserine modification.

It belongs to the SEC10 family. In terms of assembly, the exocyst complex is composed of EXOC1, EXOC2, EXOC3, EXOC4, EXOC5, EXOC6, EXOC7 and EXOC8. Interacts with EXOC3L1. As to expression, ubiquitous.

Its subcellular location is the cytoplasm. The protein localises to the midbody. Component of the exocyst complex involved in the docking of exocytic vesicles with fusion sites on the plasma membrane. The polypeptide is Exocyst complex component 5 (EXOC5) (Homo sapiens (Human)).